Here is a 202-residue protein sequence, read N- to C-terminus: 7-cyano-7-deazaguanine synthase 1 (202 aa).

7–17 provides a ligand contact to ATP; the sequence is MSGGLDSSSAA. Zn(2+) contacts are provided by C166, C174, C177, and C180.

This sequence belongs to the QueC family. The cofactor is Zn(2+).

The catalysed reaction is 7-carboxy-7-deazaguanine + NH4(+) + ATP = 7-cyano-7-deazaguanine + ADP + phosphate + H2O + H(+). It participates in purine metabolism; 7-cyano-7-deazaguanine biosynthesis. Catalyzes the ATP-dependent conversion of 7-carboxy-7-deazaguanine (CDG) to 7-cyano-7-deazaguanine (preQ(0)). The sequence is that of 7-cyano-7-deazaguanine synthase 1 (queC1) from Sulfurisphaera tokodaii (strain DSM 16993 / JCM 10545 / NBRC 100140 / 7) (Sulfolobus tokodaii).